Reading from the N-terminus, the 206-residue chain is ATP-dependent Clp protease proteolytic subunit (206 aa).

Ser-110 serves as the catalytic Nucleophile. His-135 is a catalytic residue.

The protein belongs to the peptidase S14 family. As to quaternary structure, fourteen ClpP subunits assemble into 2 heptameric rings which stack back to back to give a disk-like structure with a central cavity, resembling the structure of eukaryotic proteasomes.

The protein resides in the cytoplasm. The enzyme catalyses Hydrolysis of proteins to small peptides in the presence of ATP and magnesium. alpha-casein is the usual test substrate. In the absence of ATP, only oligopeptides shorter than five residues are hydrolyzed (such as succinyl-Leu-Tyr-|-NHMec, and Leu-Tyr-Leu-|-Tyr-Trp, in which cleavage of the -Tyr-|-Leu- and -Tyr-|-Trp bonds also occurs).. Its function is as follows. Cleaves peptides in various proteins in a process that requires ATP hydrolysis. Has a chymotrypsin-like activity. Plays a major role in the degradation of misfolded proteins. This chain is ATP-dependent Clp protease proteolytic subunit, found in Edwardsiella ictaluri (strain 93-146).